A 432-amino-acid polypeptide reads, in one-letter code: Lecithin-cholesterol acyltransferase-like 1 (432 aa).

A helical transmembrane segment spans residues 7-29 (HYSVVIAILVVVTMTSMCQAVGS). Serine 209 serves as the catalytic Acyl-ester intermediate. Catalysis depends on charge relay system residues aspartate 374 and histidine 400.

Belongs to the AB hydrolase superfamily. Lipase family.

Its subcellular location is the membrane. In Arabidopsis thaliana (Mouse-ear cress), this protein is Lecithin-cholesterol acyltransferase-like 1 (LCAT1).